The chain runs to 505 residues: Deoxyguanosinetriphosphate triphosphohydrolase (505 aa).

The 208-residue stretch at 66-273 (RLTHSMEVQQ…MEAADDISYC (208 aa)) folds into the HD domain.

The protein belongs to the dGTPase family. Type 1 subfamily. As to quaternary structure, homotetramer. It depends on Mg(2+) as a cofactor.

The enzyme catalyses dGTP + H2O = 2'-deoxyguanosine + triphosphate + H(+). DGTPase preferentially hydrolyzes dGTP over the other canonical NTPs. The chain is Deoxyguanosinetriphosphate triphosphohydrolase from Escherichia coli O127:H6 (strain E2348/69 / EPEC).